The chain runs to 229 residues: Potassium/proton antiporter CemA (229 aa).

4 helical membrane passes run 7–27 (LASL…SLSF), 106–126 (IILH…YFFL), 154–174 (ILLV…ELMI), and 189–209 (IISG…KYWI).

This sequence belongs to the CemA family.

It is found in the plastid. The protein resides in the chloroplast inner membrane. The catalysed reaction is K(+)(in) + H(+)(out) = K(+)(out) + H(+)(in). Functionally, contributes to K(+)/H(+) antiport activity by supporting proton efflux to control proton extrusion and homeostasis in chloroplasts in a light-dependent manner to modulate photosynthesis. Prevents excessive induction of non-photochemical quenching (NPQ) under continuous-light conditions. Indirectly promotes efficient inorganic carbon uptake into chloroplasts. This is Potassium/proton antiporter CemA from Phalaenopsis aphrodite subsp. formosana (Moth orchid).